The following is a 119-amino-acid chain: MAKVSQSIIKALEEEQMKQDLPEFAPGDTVVVNVKVKEGNRERLQAFEGVVIRVRNRGLHSAFTVRKVSNGEGVERTFQTHSPLVDSIKVKRRGAVRRAKLYYLRERSGKSARIREKLS.

The protein belongs to the bacterial ribosomal protein bL19 family.

Its function is as follows. This protein is located at the 30S-50S ribosomal subunit interface and may play a role in the structure and function of the aminoacyl-tRNA binding site. The protein is Large ribosomal subunit protein bL19 of Idiomarina loihiensis (strain ATCC BAA-735 / DSM 15497 / L2-TR).